Reading from the N-terminus, the 296-residue chain is Putative peptide transport system permease protein BruAb2_1032 (296 aa).

A run of 6 helical transmembrane segments spans residues 35–55 (IGLV…WITN), 97–117 (LWIG…IGIA), 131–151 (VMDA…SAAL), 205–225 (ILPN…AYAI), 229–249 (ATLS…GSIV), and 260–280 (WWIM…INLI). One can recognise an ABC transmembrane type-1 domain in the interval 97 to 281 (LWIGLTVAVL…ISALAINLIG (185 aa)).

Belongs to the binding-protein-dependent transport system permease family. As to quaternary structure, the complex is composed of two ATP-binding proteins (BruAb2_1033 and BruAb2_1034), two transmembrane proteins (BruAb2_1031 and BruAb2_1032) and a solute-binding protein (BruAb2_1030).

It localises to the cell inner membrane. Functionally, probably part of an ABC transporter complex that could be involved in peptide import. Probably responsible for the translocation of the substrate across the membrane. The protein is Putative peptide transport system permease protein BruAb2_1032 of Brucella abortus biovar 1 (strain 9-941).